We begin with the raw amino-acid sequence, 387 residues long: Cytochrome b (387 aa).

The next 4 membrane-spanning stretches (helical) occupy residues 32-52, 76-98, 113-133, and 179-199; these read FGSL…TLAM, WLVR…LHIG, TWAI…LGYV, and FFAL…MHLI. Heme b-binding residues include His-82 and His-96. Residues His-183 and His-197 each coordinate heme b. An a ubiquinone-binding site is contributed by His-202. 4 consecutive transmembrane segments (helical) span residues 226 to 246, 290 to 310, 322 to 342, and 349 to 369; these read FIFK…IFVF, LLGV…PITD, LSKV…QIGA, and FIEF…VIVP.

It belongs to the cytochrome b family. As to quaternary structure, fungal cytochrome b-c1 complex contains 10 subunits; 3 respiratory subunits, 2 core proteins and 5 low-molecular weight proteins. Cytochrome b-c1 complex is a homodimer. Requires heme b as cofactor.

It localises to the mitochondrion inner membrane. Its function is as follows. Component of the ubiquinol-cytochrome c reductase complex (complex III or cytochrome b-c1 complex) that is part of the mitochondrial respiratory chain. The b-c1 complex mediates electron transfer from ubiquinol to cytochrome c. Contributes to the generation of a proton gradient across the mitochondrial membrane that is then used for ATP synthesis. This chain is Cytochrome b (cob), found in Emericella nidulans (Aspergillus nidulans).